Consider the following 297-residue polypeptide: Cytosolic Fe-S cluster assembly factor CFD1 (297 aa).

G15–S22 is a binding site for ATP. Residues C216 and C219 each coordinate [4Fe-4S] cluster.

Belongs to the Mrp/NBP35 ATP-binding proteins family. NUBP2/CFD1 subfamily. In terms of assembly, heterotetramer of 2 NBP35 and 2 CFD1 chains. It depends on [4Fe-4S] cluster as a cofactor.

The protein localises to the cytoplasm. Component of the cytosolic iron-sulfur (Fe/S) protein assembly (CIA) machinery. Required for maturation of extramitochondrial Fe-S proteins. The NBP35-CFD1 heterotetramer forms a Fe-S scaffold complex, mediating the de novo assembly of an Fe-S cluster and its transfer to target apoproteins. The protein is Cytosolic Fe-S cluster assembly factor CFD1 of Phaeosphaeria nodorum (strain SN15 / ATCC MYA-4574 / FGSC 10173) (Glume blotch fungus).